A 300-amino-acid chain; its full sequence is Sulfate adenylyltransferase subunit 2 (300 aa).

The interval 281–300 (RAIDRDEAGSMEKKKREGYF) is disordered.

Belongs to the PAPS reductase family. CysD subfamily. Heterodimer composed of CysD, the smaller subunit, and CysN.

It carries out the reaction sulfate + ATP + H(+) = adenosine 5'-phosphosulfate + diphosphate. Its pathway is sulfur metabolism; hydrogen sulfide biosynthesis; sulfite from sulfate: step 1/3. In terms of biological role, with CysN forms the ATP sulfurylase (ATPS) that catalyzes the adenylation of sulfate producing adenosine 5'-phosphosulfate (APS) and diphosphate, the first enzymatic step in sulfur assimilation pathway. APS synthesis involves the formation of a high-energy phosphoric-sulfuric acid anhydride bond driven by GTP hydrolysis by CysN coupled to ATP hydrolysis by CysD. The protein is Sulfate adenylyltransferase subunit 2 of Brucella canis (strain ATCC 23365 / NCTC 10854 / RM-666).